The chain runs to 537 residues: Multidrug resistance protein Stp (537 aa).

14 helical membrane passes run 6–26 (LLTLIATGLGLFMIFLDALIV), 46–66 (WVVASYSLGMAVFIMSAATLA), 77–97 (IGVSLFTLGSIACGLAPSIAV), 104–124 (AQGLGAAAVSVTSLALVSAAF), 136–156 (IWTAIASIGTTTGPTLGGLLV), 163–183 (SIFYVNLPMGALVLFLTLCYV), 200–220 (LLFIVAVGALVYAVIEGPQIG), 223–243 (SVQTIVMLWTAAVGCALFVWL), 262–282 (YALAIATICTVFFAVYGMLLL), 300–320 (LMILPFSAAVAIVSPLVGHLV), 327–347 (VPILAGLCMLMLGLLMLIFSE), 352–372 (ALVLVGLGLCGSGVALCLTPI), 397–417 (AIGSTIGFAVLGSVLAAWLSA), and 478–498 (VALLVATATLAVVFLAGWRWF).

Belongs to the major facilitator superfamily. EmrB family.

Its subcellular location is the cell membrane. Its function is as follows. Contributes to spectinomycin and tetracycline resistance. The sequence is that of Multidrug resistance protein Stp (stp) from Mycobacterium tuberculosis (strain ATCC 25618 / H37Rv).